We begin with the raw amino-acid sequence, 103 residues long: Seminal ribonuclease (103 aa).

4 cysteine pairs are disulfide-bonded: Cys-12–Cys-70, Cys-26–Cys-81, Cys-44–Cys-96, and Cys-51–Cys-58. Residues 27-31 (KLVNT), Lys-52, and Arg-71 each bind substrate.

The protein belongs to the pancreatic ribonuclease family. As to quaternary structure, homodimer; disulfide-linked.

Its subcellular location is the secreted. The catalysed reaction is an [RNA] containing cytidine + H2O = an [RNA]-3'-cytidine-3'-phosphate + a 5'-hydroxy-ribonucleotide-3'-[RNA].. The enzyme catalyses an [RNA] containing uridine + H2O = an [RNA]-3'-uridine-3'-phosphate + a 5'-hydroxy-ribonucleotide-3'-[RNA].. This enzyme hydrolyzes both single- and double-stranded RNA. In Cephalophus silvicultor (Yellow-backed duiker), this protein is Seminal ribonuclease (SRN).